A 147-amino-acid polypeptide reads, in one-letter code: Ribosome-binding factor A (147 aa).

A disordered region spans residues 123–147; the sequence is LAKLKEGAQPAGDANPYKTSDEEED.

The protein belongs to the RbfA family. In terms of assembly, monomer. Binds 30S ribosomal subunits, but not 50S ribosomal subunits or 70S ribosomes.

It localises to the cytoplasm. Its function is as follows. One of several proteins that assist in the late maturation steps of the functional core of the 30S ribosomal subunit. Associates with free 30S ribosomal subunits (but not with 30S subunits that are part of 70S ribosomes or polysomes). Required for efficient processing of 16S rRNA. May interact with the 5'-terminal helix region of 16S rRNA. The polypeptide is Ribosome-binding factor A (Corynebacterium aurimucosum (strain ATCC 700975 / DSM 44827 / CIP 107346 / CN-1) (Corynebacterium nigricans)).